Here is a 187-residue protein sequence, read N- to C-terminus: Elongation factor P (187 aa).

Belongs to the elongation factor P family.

It is found in the cytoplasm. It participates in protein biosynthesis; polypeptide chain elongation. Functionally, involved in peptide bond synthesis. Stimulates efficient translation and peptide-bond synthesis on native or reconstituted 70S ribosomes in vitro. Probably functions indirectly by altering the affinity of the ribosome for aminoacyl-tRNA, thus increasing their reactivity as acceptors for peptidyl transferase. In Gloeobacter violaceus (strain ATCC 29082 / PCC 7421), this protein is Elongation factor P.